A 122-amino-acid chain; its full sequence is Phosphoribosyl-ATP pyrophosphatase (122 aa).

Belongs to the PRA-PH family.

It is found in the cytoplasm. The enzyme catalyses 1-(5-phospho-beta-D-ribosyl)-ATP + H2O = 1-(5-phospho-beta-D-ribosyl)-5'-AMP + diphosphate + H(+). The protein operates within amino-acid biosynthesis; L-histidine biosynthesis; L-histidine from 5-phospho-alpha-D-ribose 1-diphosphate: step 2/9. The chain is Phosphoribosyl-ATP pyrophosphatase from Cupriavidus metallidurans (strain ATCC 43123 / DSM 2839 / NBRC 102507 / CH34) (Ralstonia metallidurans).